Reading from the N-terminus, the 176-residue chain is ADP-ribosylation factor-like protein 11 (176 aa).

G2 is lipidated: N-myristoyl glycine. Residues 19–26 (GLDSAGKT), 63–67 (DIGGQ), and 122–125 (NKQE) each bind GTP.

This sequence belongs to the small GTPase superfamily. Arf family.

May play a role in apoptosis. May act as a tumor suppressor. The protein is ADP-ribosylation factor-like protein 11 (Arl11) of Mus musculus (Mouse).